A 491-amino-acid chain; its full sequence is Cobyric acid synthase (491 aa).

Residues 246 to 435 (KIDVAVIKLP…IHGIFDGANF (190 aa)) form the GATase cobBQ-type domain. Cys327 serves as the catalytic Nucleophile. His427 is a catalytic residue.

Belongs to the CobB/CobQ family. CobQ subfamily.

It participates in cofactor biosynthesis; adenosylcobalamin biosynthesis. Functionally, catalyzes amidations at positions B, D, E, and G on adenosylcobyrinic A,C-diamide. NH(2) groups are provided by glutamine, and one molecule of ATP is hydrogenolyzed for each amidation. This is Cobyric acid synthase from Clostridium acetobutylicum (strain ATCC 824 / DSM 792 / JCM 1419 / IAM 19013 / LMG 5710 / NBRC 13948 / NRRL B-527 / VKM B-1787 / 2291 / W).